The primary structure comprises 277 residues: Bifunctional protein FolD (277 aa).

NADP(+) contacts are provided by residues 159–161, Ser184, and Ile225; that span reads GRS.

It belongs to the tetrahydrofolate dehydrogenase/cyclohydrolase family. In terms of assembly, homodimer.

It carries out the reaction (6R)-5,10-methylene-5,6,7,8-tetrahydrofolate + NADP(+) = (6R)-5,10-methenyltetrahydrofolate + NADPH. The enzyme catalyses (6R)-5,10-methenyltetrahydrofolate + H2O = (6R)-10-formyltetrahydrofolate + H(+). It functions in the pathway one-carbon metabolism; tetrahydrofolate interconversion. Its function is as follows. Catalyzes the oxidation of 5,10-methylenetetrahydrofolate to 5,10-methenyltetrahydrofolate and then the hydrolysis of 5,10-methenyltetrahydrofolate to 10-formyltetrahydrofolate. In Acholeplasma laidlawii (strain PG-8A), this protein is Bifunctional protein FolD.